We begin with the raw amino-acid sequence, 406 residues long: Arginine deiminase (406 aa).

The active-site Amidino-cysteine intermediate is cysteine 396.

This sequence belongs to the arginine deiminase family.

It is found in the cytoplasm. The catalysed reaction is L-arginine + H2O = L-citrulline + NH4(+). It participates in amino-acid degradation; L-arginine degradation via ADI pathway; carbamoyl phosphate from L-arginine: step 1/2. This Aliivibrio fischeri (strain ATCC 700601 / ES114) (Vibrio fischeri) protein is Arginine deiminase.